The chain runs to 93 residues: Translation initiation factor IF-1 (93 aa).

The S1-like domain maps to 1–72; it reads MAKEELIQFE…EKGRLIFRHK (72 aa). The disordered stretch occupies residues 70–93; sequence RHKDERPGGPPRSGPPRGGQFRRR.

Belongs to the IF-1 family. As to quaternary structure, component of the 30S ribosomal translation pre-initiation complex which assembles on the 30S ribosome in the order IF-2 and IF-3, IF-1 and N-formylmethionyl-tRNA(fMet); mRNA recruitment can occur at any time during PIC assembly.

It is found in the cytoplasm. Its function is as follows. One of the essential components for the initiation of protein synthesis. Stabilizes the binding of IF-2 and IF-3 on the 30S subunit to which N-formylmethionyl-tRNA(fMet) subsequently binds. Helps modulate mRNA selection, yielding the 30S pre-initiation complex (PIC). Upon addition of the 50S ribosomal subunit IF-1, IF-2 and IF-3 are released leaving the mature 70S translation initiation complex. In Nitrobacter winogradskyi (strain ATCC 25391 / DSM 10237 / CIP 104748 / NCIMB 11846 / Nb-255), this protein is Translation initiation factor IF-1.